The following is a 327-amino-acid chain: Biotin synthase (327 aa).

Residues 52-279 (TKVQLSTLVS…ASYVRLSAGR (228 aa)) enclose the Radical SAM core domain. [4Fe-4S] cluster contacts are provided by Cys67, Cys71, and Cys74. [2Fe-2S] cluster is bound by residues Cys111, Cys142, Cys202, and Arg274.

This sequence belongs to the radical SAM superfamily. Biotin synthase family. Homodimer. The cofactor is [4Fe-4S] cluster. It depends on [2Fe-2S] cluster as a cofactor.

It carries out the reaction (4R,5S)-dethiobiotin + (sulfur carrier)-SH + 2 reduced [2Fe-2S]-[ferredoxin] + 2 S-adenosyl-L-methionine = (sulfur carrier)-H + biotin + 2 5'-deoxyadenosine + 2 L-methionine + 2 oxidized [2Fe-2S]-[ferredoxin]. Its pathway is cofactor biosynthesis; biotin biosynthesis; biotin from 7,8-diaminononanoate: step 2/2. In terms of biological role, catalyzes the conversion of dethiobiotin (DTB) to biotin by the insertion of a sulfur atom into dethiobiotin via a radical-based mechanism. In Chromobacterium violaceum (strain ATCC 12472 / DSM 30191 / JCM 1249 / CCUG 213 / NBRC 12614 / NCIMB 9131 / NCTC 9757 / MK), this protein is Biotin synthase.